A 339-amino-acid chain; its full sequence is DNA-directed RNA polymerase subunit alpha (339 aa).

Positions 1–235 are alpha N-terminal domain (alpha-NTD); sequence MVIQRNWQSL…DQLQLFINFE (235 aa). An alpha C-terminal domain (alpha-CTD) region spans residues 251 to 339; sequence FNRNLLRKVD…DLAKRLEEPF (89 aa).

This sequence belongs to the RNA polymerase alpha chain family. As to quaternary structure, homodimer. The RNAP catalytic core consists of 2 alpha, 1 beta, 1 beta' and 1 omega subunit. When a sigma factor is associated with the core the holoenzyme is formed, which can initiate transcription.

The catalysed reaction is RNA(n) + a ribonucleoside 5'-triphosphate = RNA(n+1) + diphosphate. Functionally, DNA-dependent RNA polymerase catalyzes the transcription of DNA into RNA using the four ribonucleoside triphosphates as substrates. The polypeptide is DNA-directed RNA polymerase subunit alpha (Granulibacter bethesdensis (strain ATCC BAA-1260 / CGDNIH1)).